The following is a 506-amino-acid chain: Acetaldehyde dehydrogenase (506 aa).

Active-site residues include glutamate 262 and cysteine 301.

This sequence belongs to the aldehyde dehydrogenase family.

It carries out the reaction acetaldehyde + NAD(+) + H2O = acetate + NADH + 2 H(+). The protein operates within alcohol metabolism; ethanol degradation; acetate from ethanol: step 2/2. Catalyzes the NAD(+)-dependent oxidation of acetaldehyde to acetate. Is likely a component of the ethanol oxidation system that allows P.aeruginosa to grow on ethanol as the sole carbon and energy source. The chain is Acetaldehyde dehydrogenase from Pseudomonas aeruginosa.